Reading from the N-terminus, the 327-residue chain is 2-oxoglutarate-dependent dioxygenase traH (327 aa).

Residues 183–290 enclose the Fe2OG dioxygenase domain; sequence TTDAAMFLKL…YAVPAFWHGD (108 aa). Fe cation-binding residues include H211, D213, and H270. R280 provides a ligand contact to 2-oxoglutarate.

Belongs to the iron/ascorbate-dependent oxidoreductase family. Requires Fe(2+) as cofactor.

The protein operates within secondary metabolite biosynthesis. In terms of biological role, 2-oxoglutarate-dependent dioxygenase; part of the tra gene cluster that produces terrestric acid. The clavatol biosynthesis cluster cla and the terrestric acid cluster tra are both involved in the production of peniphenones and penilactones. The non-reducing PKS claF is responsible for the formation of clavatol from successive condensations of 3 malonyl-CoA units, presumably with a simple acetyl-CoA starter unit, and 2 methylation steps. The esterase claE probably collaborates with claF by catalyzing the hydrolysis of ACP-bound acyl intermediates to free the ACP from stalled intermediates. The clavatol oxidase claD then converts clavatol to hydroxyclavatol. Spontaneous dehydration of hydroxyclavatol leads to the accumulation of the highly active ortho-quinone methide. On the other hand, the PKS-NRPS hybrid traA is involved in the formation of crustosic acid, with the help of traB and traD. The polyketide synthase module (PKS) of traA is responsible for the synthesis of the polyketide backbone via the condensation of an acetyl-CoA starter unit with 3 malonyl-CoA units. The downstream nonribosomal peptide synthetase (NRPS) module then amidates the carboxyl end of the polyketide with L-malic acid. Because traA lacks a designated enoylreductase (ER) domain, the required activity is provided the enoyl reductase traG. Crustosic acid undergoes decarboxylation and isomerization to the terrestric acid, catalyzed by the 2-oxoglutarate-dependent dioxygenase traH. Both acids are further converted to the 2 gamma-butyrolactones (R)-5-methyltetronic acid and (S)-5-carboxylmethyltetronic acid, with involvement of the cytochrome P450 monooxygenase claJ. Spontaneous addition of the methide to these gamma-butyrolactones leads to peniphenone D and penilactone D, which undergo again stereospecific attacking by methide to give penilactones A and B. This is 2-oxoglutarate-dependent dioxygenase traH from Penicillium crustosum (Blue mold fungus).